The following is a 164-amino-acid chain: Phosphopantetheine adenylyltransferase (164 aa).

Thr14 contributes to the substrate binding site. Residues 14–15 (TF) and His22 each bind ATP. Substrate-binding residues include Lys46, Leu78, and Arg92. ATP-binding positions include 93-95 (GLR), Glu103, and 128-134 (HAFISST).

It belongs to the bacterial CoaD family. As to quaternary structure, homohexamer. Mg(2+) is required as a cofactor.

The protein localises to the cytoplasm. It carries out the reaction (R)-4'-phosphopantetheine + ATP + H(+) = 3'-dephospho-CoA + diphosphate. It functions in the pathway cofactor biosynthesis; coenzyme A biosynthesis; CoA from (R)-pantothenate: step 4/5. Its function is as follows. Reversibly transfers an adenylyl group from ATP to 4'-phosphopantetheine, yielding dephospho-CoA (dPCoA) and pyrophosphate. This Vibrio cholerae serotype O1 (strain ATCC 39541 / Classical Ogawa 395 / O395) protein is Phosphopantetheine adenylyltransferase.